The following is a 132-amino-acid chain: Chemokine-like protein TAFA-5 (132 aa).

The N-terminal stretch at 1-43 (MAPSPRTSSRQDATALPSMSSTFWAFMILASLLIAYCSQLAAG) is a signal peptide. Asparagine 113 carries N-linked (GlcNAc...) asparagine glycosylation.

Belongs to the TAFA family. As to expression, expressed in the subcutaneous, brown, epididymal and perirenal adipose tissue (at protein level).

The protein localises to the secreted. Acts as a chemokine-like protein by regulating cell proliferation and migration through activation of G protein-coupled receptors (GPCRs), such as S1PR2 and FPR2. Stimulates chemotactic migration of macrophages mediated by the MAPK3/ERK1 and AKT1 pathway. Blocks TNFSF11/RANKL-induced osteoclast formation from macrophages by inhibiting up-regulation of osteoclast fusogenic and differentiation genes. Stimulation of macrophage migration and inhibition of osteoclast formation is mediated through the GPCR FPR2. Acts as an adipokine by negatively regulating vascular smooth muscle cell (VSMC) proliferation and migration in response to platelet-derived growth factor stimulation via GPCR S1PR2 and G protein GNA12/GNA13-transmitted RHOA signaling. Inhibits injury-induced cell proliferation and neointima formation in the femoral arteries. This Mus musculus (Mouse) protein is Chemokine-like protein TAFA-5 (Tafa5).